The sequence spans 400 residues: MRIVQPVIEQLKAQSHPVCHYIYDLVGLEHHLQHITSSLPSNCQMYYAMKANSERKILDTISQYVEGFEVASQGEIAKGLAFKPANHIIFGGPGKTDEELRYAVSEGVQRIHVESMHELQRLNAILEDEDKTQHILLRVNLAGPFPNATLHMAGRPTQFGISEDEVDDVIEAALAMPKIHLDGFHFHSISNNLDSNLHVDVVKLYFKKAKAWSEKHRFPLKHINLGGGIGVNYADLTNQFEWDNFVERFKTLIVEQEMEDVTLNFECGRFIVAHIGYYVTEVLDIKKVHGAWYAILRGGTQQFRLPVSWQHNHPFDIYRYKDNPYSFEKVSISRQDTTLVGQLCTPKDVFAREVQIDAISTGDVIVFKYAGAYGWSISHHDFLSHPHPEFIYLTQTKEDE.

Lys-50 is subject to N6-(pyridoxal phosphate)lysine. Pyridoxal 5'-phosphate contacts are provided by residues Gly-228 and Glu-266–Arg-269. Cys-344 functions as the Proton donor in the catalytic mechanism. Position 373 (Tyr-373) interacts with pyridoxal 5'-phosphate.

Belongs to the Orn/Lys/Arg decarboxylase class-II family. In terms of assembly, homodimer. Pyridoxal 5'-phosphate is required as a cofactor.

It catalyses the reaction 2-[(L-alanin-3-ylcarbamoyl)methyl]-2-hydroxybutanedioate + H(+) = 2-[(2-aminoethylcarbamoyl)methyl]-2-hydroxybutanedioate + CO2. It functions in the pathway siderophore biosynthesis. In terms of biological role, catalyzes the decarboxylation of citryl-L-2,3-diaminopropionic acid to citryl-diaminoethane, the second step in staphyloferrin B biosynthesis. The polypeptide is 2-[(L-alanin-3-ylcarbamoyl)methyl]-2-hydroxybutanedioate decarboxylase (Staphylococcus aureus (strain NCTC 8325 / PS 47)).